Consider the following 178-residue polypeptide: ATP-dependent protease subunit HslV (178 aa).

Threonine 7 is an active-site residue. Residues glycine 162, cysteine 165, and threonine 168 each coordinate Na(+).

It belongs to the peptidase T1B family. HslV subfamily. In terms of assembly, a double ring-shaped homohexamer of HslV is capped on each side by a ring-shaped HslU homohexamer. The assembly of the HslU/HslV complex is dependent on binding of ATP.

The protein localises to the cytoplasm. It carries out the reaction ATP-dependent cleavage of peptide bonds with broad specificity.. Its activity is regulated as follows. Allosterically activated by HslU binding. In terms of biological role, protease subunit of a proteasome-like degradation complex believed to be a general protein degrading machinery. The polypeptide is ATP-dependent protease subunit HslV (Paraburkholderia xenovorans (strain LB400)).